The chain runs to 343 residues: Mitochondrial distribution and morphology protein 34 (343 aa).

The 196-residue stretch at 1–196 folds into the SMP-LTD domain; sequence MSFVFPSWST…LPGIIHRLSQ (196 aa). Disordered stretches follow at residues 227-255 and 300-325; these read EVEE…IGPG and GAGT…KAKR. Residues 306–317 are compositionally biased toward low complexity; that stretch reads SGRASLASSSVG.

It belongs to the MDM34 family. In terms of assembly, component of the ER-mitochondria encounter structure (ERMES) or MDM complex, composed of MMM1, MDM10, MDM12 and MDM34.

Its subcellular location is the mitochondrion outer membrane. Its function is as follows. Component of the ERMES/MDM complex, which serves as a molecular tether to connect the endoplasmic reticulum (ER) and mitochondria. Components of this complex are involved in the control of mitochondrial shape and protein biogenesis, and function in nonvesicular lipid trafficking between the ER and mitochondria. MDM34 is required for the interaction of the ER-resident membrane protein MMM1 and the outer mitochondrial membrane-resident beta-barrel protein MDM10. The chain is Mitochondrial distribution and morphology protein 34 from Cryptococcus neoformans var. neoformans serotype D (strain B-3501A) (Filobasidiella neoformans).